A 253-amino-acid chain; its full sequence is POU Class 2 homeobox-associating factor 3 (253 aa).

The OCA domain maps to 5-27 (PKVYQGVRVKMTVKELLQQRRAH).

Belongs to the POU2AF family. As to quaternary structure, interacts with POU2F3 in a DNA-dependent manner; this interaction increases POU2F3 transactivation activity. Expressed in tuft cells.

Its subcellular location is the cytoplasm. It is found in the nucleus. Functionally, transcriptional coactivator that specifically associates with POU2F3. This complex drives the development of tuft cells, a rare a rare chemosensory cells that coordinate immune and neural functions within mucosal epithelial tissues. In Mus musculus (Mouse), this protein is POU Class 2 homeobox-associating factor 3.